The primary structure comprises 648 residues: Protein teflon (648 aa).

Residues 33 to 56 (LYCHFCRDLFTQLPEFLRHLQGAH) form a C2H2-type 1 zinc finger. Disordered regions lie at residues 76–127 (SGEQ…GSQN) and 146–170 (EHIN…NSES). Residues 85 to 94 (VGHNSSSSDS) are compositionally biased toward polar residues. The segment covering 96–107 (GLAKSEDSRATE) has biased composition (basic and acidic residues). The segment at 598–620 (YFCKCCDDIFTLNEDYIRHLVSQ) adopts a C2H2-type 2; degenerate zinc-finger fold. The C2H2-type 3 zinc finger occupies 624–647 (YQCTKCIKTFKYQGHYDKHMRTVH).

The protein belongs to the Teflon family.

It is found in the nucleus. The protein localises to the chromosome. Specifically required in males for proper segregation of autosomal bivalents at meiosis I. Expression is required in the male germ line prior to spermatocyte stage S4. May have a role as a bridging molecule maintaining adhesion to hold autosome bivalents together via heterochromatic connections. The sequence is that of Protein teflon from Drosophila yakuba (Fruit fly).